An 89-amino-acid polypeptide reads, in one-letter code: Putative regulatory protein RBAM_015500 (89 aa).

Belongs to the RemA family.

The polypeptide is Putative regulatory protein RBAM_015500 (Bacillus velezensis (strain DSM 23117 / BGSC 10A6 / LMG 26770 / FZB42) (Bacillus amyloliquefaciens subsp. plantarum)).